Reading from the N-terminus, the 375-residue chain is Succinyl-diaminopimelate desuccinylase (375 aa).

His66 provides a ligand contact to Zn(2+). Asp68 is an active-site residue. Asp99 is a Zn(2+) binding site. The active-site Proton acceptor is the Glu133. Zn(2+)-binding residues include Glu134, Glu162, and His348.

It belongs to the peptidase M20A family. DapE subfamily. In terms of assembly, homodimer. It depends on Zn(2+) as a cofactor. The cofactor is Co(2+).

It carries out the reaction N-succinyl-(2S,6S)-2,6-diaminopimelate + H2O = (2S,6S)-2,6-diaminopimelate + succinate. The protein operates within amino-acid biosynthesis; L-lysine biosynthesis via DAP pathway; LL-2,6-diaminopimelate from (S)-tetrahydrodipicolinate (succinylase route): step 3/3. Its function is as follows. Catalyzes the hydrolysis of N-succinyl-L,L-diaminopimelic acid (SDAP), forming succinate and LL-2,6-diaminopimelate (DAP), an intermediate involved in the bacterial biosynthesis of lysine and meso-diaminopimelic acid, an essential component of bacterial cell walls. The polypeptide is Succinyl-diaminopimelate desuccinylase (Cronobacter sakazakii (strain ATCC BAA-894) (Enterobacter sakazakii)).